The sequence spans 877 residues: DNA polymerase I (877 aa).

Positions 177–270 constitute a 5'-3' exonuclease domain; it reads TPAQFIDLKA…LEDLVYSGPD (94 aa). The 164-residue stretch at 302-465 folds into the 3'-5' exonuclease domain; it reads DFTIVDQISQ…TEPILLEKLS (164 aa).

The protein belongs to the DNA polymerase type-A family. Single-chain monomer with multiple functions.

It carries out the reaction DNA(n) + a 2'-deoxyribonucleoside 5'-triphosphate = DNA(n+1) + diphosphate. Functionally, in addition to polymerase activity, this DNA polymerase exhibits 3'-5' and 5'-3' exonuclease activity. This Streptococcus pneumoniae serotype 4 (strain ATCC BAA-334 / TIGR4) protein is DNA polymerase I (polA).